The sequence spans 627 residues: uncharacterized protein (627 aa).

This is an uncharacterized protein from Caenorhabditis elegans.